We begin with the raw amino-acid sequence, 116 residues long: Large ribosomal subunit protein bL20c (116 aa).

This sequence belongs to the bacterial ribosomal protein bL20 family.

It localises to the plastid. Its subcellular location is the chloroplast. Functionally, binds directly to 23S ribosomal RNA and is necessary for the in vitro assembly process of the 50S ribosomal subunit. It is not involved in the protein synthesizing functions of that subunit. The sequence is that of Large ribosomal subunit protein bL20c from Cyanidioschyzon merolae (strain NIES-3377 / 10D) (Unicellular red alga).